A 318-amino-acid chain; its full sequence is GTP 3',8-cyclase (318 aa).

Residues 5-217 (KFERKIDYIR…DKIAKKYKFK (213 aa)) form the Radical SAM core domain. R14 serves as a coordination point for GTP. [4Fe-4S] cluster-binding residues include C21 and C25. Position 27 (Y27) interacts with S-adenosyl-L-methionine. [4Fe-4S] cluster is bound at residue C28. R64 contributes to the GTP binding site. G68 is a binding site for S-adenosyl-L-methionine. A GTP-binding site is contributed by T95. Position 119 (S119) interacts with S-adenosyl-L-methionine. GTP is bound at residue K155. M189 contacts S-adenosyl-L-methionine. [4Fe-4S] cluster is bound by residues C248 and C251. 253–255 (RIR) serves as a coordination point for GTP. [4Fe-4S] cluster is bound at residue C265.

It belongs to the radical SAM superfamily. MoaA family. Monomer and homodimer. [4Fe-4S] cluster serves as cofactor.

It catalyses the reaction GTP + AH2 + S-adenosyl-L-methionine = (8S)-3',8-cyclo-7,8-dihydroguanosine 5'-triphosphate + 5'-deoxyadenosine + L-methionine + A + H(+). The protein operates within cofactor biosynthesis; molybdopterin biosynthesis. Catalyzes the cyclization of GTP to (8S)-3',8-cyclo-7,8-dihydroguanosine 5'-triphosphate. The sequence is that of GTP 3',8-cyclase from Nautilia profundicola (strain ATCC BAA-1463 / DSM 18972 / AmH).